Here is a 518-residue protein sequence, read N- to C-terminus: Crotonobetaine/carnitine--CoA ligase (518 aa).

This sequence belongs to the ATP-dependent AMP-binding enzyme family.

It catalyses the reaction 4-(trimethylamino)butanoate + ATP + CoA = 4-(trimethylamino)butanoyl-CoA + AMP + diphosphate. It carries out the reaction crotonobetaine + ATP + CoA = crotonobetainyl-CoA + AMP + diphosphate. The catalysed reaction is (R)-carnitine + ATP + CoA = (R)-carnitinyl-CoA + AMP + diphosphate. Its pathway is amine and polyamine metabolism; carnitine metabolism. In terms of biological role, catalyzes the transfer of CoA to carnitine, generating the initial carnitinyl-CoA needed for the CaiB reaction cycle. Also has activity toward crotonobetaine and gamma-butyrobetaine. In Proteus mirabilis (strain HI4320), this protein is Crotonobetaine/carnitine--CoA ligase.